A 270-amino-acid polypeptide reads, in one-letter code: Putative envelope-preserving system protein Rv2743c (270 aa).

A run of 2 helical transmembrane segments spans residues A50 to A72 and F77 to L99.

In terms of assembly, interacts with PspA and Rv2742c.

The protein localises to the membrane. Functionally, involved in preservation of envelope integrity and tolerance to surface stress. Reverses the inhibitory effect of PspA on ClgR activity. Facilitates intracellular growth of M.tuberculosis. This is Putative envelope-preserving system protein Rv2743c from Mycobacterium tuberculosis (strain ATCC 25618 / H37Rv).